Reading from the N-terminus, the 464-residue chain is Molybdate transporter 2 (464 aa).

The Tonoplast targeting signal motif lies at 8-9; the sequence is LL. The next 9 helical transmembrane spans lie at 33–53, 62–82, 116–136, 172–192, 223–243, 309–329, 348–368, 374–394, and 404–424; these read LSGA…LTLV, LIFT…PMPV, LLLG…LPVV, IWLG…IILS, LLSS…LCFI, VSIS…MPVC, SVIF…NSFV, FPIG…AMAS, and FIML…LGFG.

Belongs to the SLC26A/SulP transporter (TC 2.A.53) family. As to expression, expressed in leaves. Not detected in roots, shoots and seeds.

The protein resides in the vacuole membrane. Molybdate transporter required for vacuolar molybdate export during senescence. This chain is Molybdate transporter 2 (MOT2), found in Arabidopsis thaliana (Mouse-ear cress).